Reading from the N-terminus, the 157-residue chain is Serine-protein kinase RsbW (157 aa).

Belongs to the anti-sigma-factor family.

It catalyses the reaction L-seryl-[protein] + ATP = O-phospho-L-seryl-[protein] + ADP + H(+). It carries out the reaction L-threonyl-[protein] + ATP = O-phospho-L-threonyl-[protein] + ADP + H(+). Functionally, negative regulator of sigma-B activity. Phosphorylates and inactivates its specific antagonist protein, RsbV. Upon phosphorylation of RsbV, RsbW is released and binds to sigma-B, thereby blocking its ability to form an RNA polymerase holoenzyme (E-sigma-B). The chain is Serine-protein kinase RsbW from Listeria innocua serovar 6a (strain ATCC BAA-680 / CLIP 11262).